The chain runs to 360 residues: Probable mannan endo-1,4-beta-mannosidase A (360 aa).

Positions 1–18 (MKLSQILTFASLLSGALA) are cleaved as a signal peptide. 2 residues coordinate substrate: Asn-142 and Asn-178. Residue Glu-179 is the Proton donor of the active site. Tyr-254 provides a ligand contact to substrate. Glu-287 (nucleophile) is an active-site residue. Asn-307 is a glycosylation site (N-linked (GlcNAc...) asparagine). Substrate is bound at residue Trp-317.

The protein belongs to the glycosyl hydrolase 5 (cellulase A) family.

It is found in the secreted. It catalyses the reaction Random hydrolysis of (1-&gt;4)-beta-D-mannosidic linkages in mannans, galactomannans and glucomannans.. Functionally, endo-1,4-mannanase, a crucial enzyme for depolymerization of seed galactomannans and wood galactoglucomannans. The protein is Probable mannan endo-1,4-beta-mannosidase A (manA) of Aspergillus clavatus (strain ATCC 1007 / CBS 513.65 / DSM 816 / NCTC 3887 / NRRL 1 / QM 1276 / 107).